Reading from the N-terminus, the 107-residue chain is Guanylate cyclase activator 2B (107 aa).

The signal sequence occupies residues 1–21 (MSGSQLWAAVVVLLLLQSAQG). A propeptide spanning residues 22–92 (VYIKYHGFQV…STFKALRTIA (71 aa)) is cleaved from the precursor. Cystine bridges form between C63-C76, C96-C104, and C99-C107.

It belongs to the guanylin family.

The protein resides in the secreted. In terms of biological role, endogenous activator of intestinal guanylate cyclase. It stimulates this enzyme through the same receptor binding region as the heat-stable enterotoxins. May be a potent physiological regulator of intestinal fluid and electrolyte transport. May be an autocrine/paracrine regulator of intestinal salt and water transport. This is Guanylate cyclase activator 2B (GUCA2B) from Notomys alexis (Spinifex hopping mouse).